The chain runs to 389 residues: Glutamate 5-kinase (389 aa).

Lysine 17 contacts ATP. Residues serine 57, aspartate 144, and asparagine 156 each contribute to the substrate site. 176-177 (SD) contacts ATP. A PUA domain is found at 282–359 (AGEIHVDAGA…NEIETILGYV (78 aa)).

The protein belongs to the glutamate 5-kinase family.

Its subcellular location is the cytoplasm. It catalyses the reaction L-glutamate + ATP = L-glutamyl 5-phosphate + ADP. It functions in the pathway amino-acid biosynthesis; L-proline biosynthesis; L-glutamate 5-semialdehyde from L-glutamate: step 1/2. In terms of biological role, catalyzes the transfer of a phosphate group to glutamate to form L-glutamate 5-phosphate. The protein is Glutamate 5-kinase of Agrobacterium fabrum (strain C58 / ATCC 33970) (Agrobacterium tumefaciens (strain C58)).